The primary structure comprises 195 residues: Calcium channel flower (195 aa).

The next 3 helical transmembrane spans lie at 34 to 54 (LLGI…VISI), 66 to 88 (IIQM…VCIE), and 117 to 137 (IFMC…ATGV).

Belongs to the calcium channel flower family. As to quaternary structure, homomultimer. Associates with the dally/ magu complex.

It localises to the cell membrane. The protein resides in the cytoplasmic vesicle. Its subcellular location is the secretory vesicle. It is found in the synaptic vesicle membrane. The protein localises to the presynaptic cell membrane. It localises to the endosome. Channel activity is inhibited by La(3+), which reduces Ca(2+) influx and thus inhibits it's function in promoting activity-dependent bulk endocytosis (ADBE) in response to high stimuli. Functionally, transmembrane protein which mediates synaptic endocytosis, fitness-based cell culling, neuronal culling, morphogen gradient scaling, and calcium transport. Regulates synaptic endocytosis and hence couples exo- with endocytosis. Controls two major modes of synaptic vesicle (SV) endocytosis in the synaptic boutons of neuromuscular junctions (NMJs); Ca(2+) channel-independent Clathrin-mediated endocytosis (CME) in response to mild stimulation, and Ca(2+) channel-dependent activity-dependent bulk endocytosis (ADBE) in response to strong stimulation. Functions in ADBE and subsequent SV reformation from bulk endosomes by initiating Ca(2+) channel-dependent phosphatidylinositol 4,5-bisphosphate (PtdIns(4,5)P2) compartmentalization in synaptic boutons. There it acts at the periactive zone to provide the low Ca(2+) levels required to initiate Calcineurin activation and upregulate PtdIns(4,5)P2. Conversely PtdIns(4,5)P2 enhances fwe Ca(2+) channel-activity, establishing a positive feedback loop that induces PtdIns(4,5)P2 microdomain at the periactive zone. These microdomains trigger bulk membrane invagination (i.e. ADBE) by triggering actin polymerization while also promoting localization of fwe to bulk endosomes, thereby removing the ADBE trigger to reduce endocytosis and prevent excess membrane uptake. PtdIns(4,5)P2 then promotes SV reformation from the bulk endosomes, to coordinate ADBE and subsequent SV reformation. Different combinations of the flower isoforms at the cell membrane are also required for the identification and elimination of suboptimal or supernumerary cells during development, regeneration, and adulthood. Required for the recognition and elimination of unfit cells in the developing wing during cell competition. In the developing pupal retina, mediates the elimination of unwanted postmitotic neurons, including supernumerary photoreceptor neurons that form at the periphery of the retina and are contained within incomplete ommatidia units. Also required for efficient elimination and replacement of old neurons by newly generated neurons during regeneration in the adult brain following mechanical injury. Downstream of the flower fitness fingerprints, cells identified as unwanted or unfit are eliminated via apoptosis through the expression of ahuizotl (azot). However, the cells marked for elimination by the flower isoforms only undergo apoptosis if additional thresholds are met; (1) their neighboring fit/healthy cells express different levels of the fwe isoforms, and (2) the levels of the protective signal SPARC expressed by the loser or unwanted cells are unable to inhibit caspase activation. These additional thresholds for flower-mediated apoptosis, allows useful cells to recover from transient and limited stress before they are unnecessarily eliminated. Functions with dally and magu in a mechanism of scaling, which utilises apoptosis to ensure that the dpp morphogen gradient, which mediates organ growth, remains proportional to the size of the growing wing. In this mechanism, fwe represses dally- and Magu-dependent activity in expanding the gradient, and dally/Magu inhibits fwe-dependent apoptosis to keep cell death rate low. When the levels of these different proteins are optimally regulated the gradient correctly scales with organ growth but when this fails, fwe-mediated apoptosis is activated to trim the developing tissue to match the correct size of the gradient. The chain is Calcium channel flower from Drosophila ananassae (Fruit fly).